A 461-amino-acid polypeptide reads, in one-letter code: Phosphomethylpyrimidine synthase (461 aa).

Substrate-binding positions include asparagine 81, methionine 110, tyrosine 140, histidine 176, 196-198 (SRG), 237-240 (DSLR), and glutamate 276. Histidine 280 contributes to the Zn(2+) binding site. Tyrosine 303 lines the substrate pocket. Histidine 344 contacts Zn(2+). Positions 424, 427, and 432 each coordinate [4Fe-4S] cluster.

The protein belongs to the ThiC family. [4Fe-4S] cluster is required as a cofactor.

It carries out the reaction 5-amino-1-(5-phospho-beta-D-ribosyl)imidazole + S-adenosyl-L-methionine = 4-amino-2-methyl-5-(phosphooxymethyl)pyrimidine + CO + 5'-deoxyadenosine + formate + L-methionine + 3 H(+). The protein operates within cofactor biosynthesis; thiamine diphosphate biosynthesis. Functionally, catalyzes the synthesis of the hydroxymethylpyrimidine phosphate (HMP-P) moiety of thiamine from aminoimidazole ribotide (AIR) in a radical S-adenosyl-L-methionine (SAM)-dependent reaction. This Thermosynechococcus vestitus (strain NIES-2133 / IAM M-273 / BP-1) protein is Phosphomethylpyrimidine synthase.